Reading from the N-terminus, the 240-residue chain is Glutathione S-transferase theta-1 (240 aa).

A GST N-terminal domain is found at 2-82 (VLELYLDLLS…YLAHKYKVPD (81 aa)). Glutathione is bound by residues His40, 53–54 (RV), and 66–67 (ES). The region spanning 88–222 (DLQARARVDE…VILKVKDCPP (135 aa)) is the GST C-terminal domain.

This sequence belongs to the GST superfamily. Theta family. In terms of assembly, homodimer. In liver, highest expression found in central vein limiting plate hepatocytes. Also expressed in interlobular bile duct epithelial cells. In lung, expressed in club cells and ciliated cells of the bronchiolar epithelium and in type II alveolar cells of the lung parenchyma.

The protein localises to the cytoplasm. The protein resides in the nucleus. It catalyses the reaction RX + glutathione = an S-substituted glutathione + a halide anion + H(+). Functionally, conjugation of reduced glutathione to a wide number of exogenous and endogenous hydrophobic electrophiles. Also binds steroids, bilirubin, carcinogens and numerous organic anions. Has dichloromethane dehalogenase activity. The chain is Glutathione S-transferase theta-1 (Gstt1) from Mus musculus (Mouse).